Reading from the N-terminus, the 232-residue chain is 2,3,4,5-tetrahydropyridine-2,6-dicarboxylate N-acetyltransferase (232 aa).

This sequence belongs to the transferase hexapeptide repeat family. DapH subfamily.

It catalyses the reaction (S)-2,3,4,5-tetrahydrodipicolinate + acetyl-CoA + H2O = L-2-acetamido-6-oxoheptanedioate + CoA. It participates in amino-acid biosynthesis; L-lysine biosynthesis via DAP pathway; LL-2,6-diaminopimelate from (S)-tetrahydrodipicolinate (acetylase route): step 1/3. In terms of biological role, catalyzes the transfer of an acetyl group from acetyl-CoA to tetrahydrodipicolinate. In Streptococcus thermophilus (strain CNRZ 1066), this protein is 2,3,4,5-tetrahydropyridine-2,6-dicarboxylate N-acetyltransferase.